Reading from the N-terminus, the 231-residue chain is Ribonuclease 3 (231 aa).

In terms of domain architecture, RNase III spans 5-134 (QKKLKNDYGL…FLGALFIDQG (130 aa)). A Mg(2+)-binding site is contributed by Glu-47. The active site involves Asp-51. Asn-120 and Glu-123 together coordinate Mg(2+). Residue Glu-123 is part of the active site. Positions 160-229 (DYKTELQEVL…AENAIKGQNH (70 aa)) constitute a DRBM domain.

Belongs to the ribonuclease III family. In terms of assembly, homodimer. Mg(2+) is required as a cofactor.

The protein localises to the cytoplasm. The enzyme catalyses Endonucleolytic cleavage to 5'-phosphomonoester.. Functionally, digests double-stranded RNA. Involved in the processing of primary rRNA transcript to yield the immediate precursors to the large and small rRNAs (23S and 16S). Processes some mRNAs, and tRNAs when they are encoded in the rRNA operon. Processes pre-crRNA and tracrRNA of type II CRISPR loci if present in the organism. This is Ribonuclease 3 from Lactococcus lactis subsp. cremoris (strain MG1363).